The sequence spans 299 residues: Rhodanese-like/PpiC domain-containing protein 12, chloroplastic (299 aa).

The transit peptide at Met-1–Ala-81 directs the protein to the chloroplast. Ser-82 carries the N-acetylserine modification. Positions Ser-93 to Ser-183 constitute a PpiC domain. The 93-residue stretch at Phe-205–Pro-297 folds into the Rhodanese domain. Catalysis depends on Cys-257, which acts as the Cysteine persulfide intermediate.

The protein localises to the plastid. It is found in the chloroplast. The polypeptide is Rhodanese-like/PpiC domain-containing protein 12, chloroplastic (Arabidopsis thaliana (Mouse-ear cress)).